A 118-amino-acid polypeptide reads, in one-letter code: Immunoglobulin heavy variable 4-31 (118 aa).

The signal sequence occupies residues 1 to 19 (MKHLWFFLLLVAAPRWVLS). The framework-1 stretch occupies residues 20–44 (QVQLQESGPGLVKPSQTLSLTCTVS). Positions 20 to 118 (QVQLQESGPG…ADTAVYYCAR (99 aa)) constitute an Ig-like domain. Cysteines 41 and 116 form a disulfide. Residues 45–54 (GGSISSGGYY) are complementarity-determining-1. Residues 55-71 (WSWIRQHPGKGLEWIGY) are framework-2. The interval 72–78 (IYYSGST) is complementarity-determining-2. The segment at 79-116 (YYNPSLKSLVTISVDTSKNQFSLKLSSVTAADTAVYYC) is framework-3. The interval 117 to 118 (AR) is complementarity-determining-3.

In terms of assembly, immunoglobulins are composed of two identical heavy chains and two identical light chains; disulfide-linked.

The protein localises to the secreted. It is found in the cell membrane. In terms of biological role, v region of the variable domain of immunoglobulin heavy chains that participates in the antigen recognition. Immunoglobulins, also known as antibodies, are membrane-bound or secreted glycoproteins produced by B lymphocytes. In the recognition phase of humoral immunity, the membrane-bound immunoglobulins serve as receptors which, upon binding of a specific antigen, trigger the clonal expansion and differentiation of B lymphocytes into immunoglobulins-secreting plasma cells. Secreted immunoglobulins mediate the effector phase of humoral immunity, which results in the elimination of bound antigens. The antigen binding site is formed by the variable domain of one heavy chain, together with that of its associated light chain. Thus, each immunoglobulin has two antigen binding sites with remarkable affinity for a particular antigen. The variable domains are assembled by a process called V-(D)-J rearrangement and can then be subjected to somatic hypermutations which, after exposure to antigen and selection, allow affinity maturation for a particular antigen. This chain is Immunoglobulin heavy variable 4-31, found in Homo sapiens (Human).